We begin with the raw amino-acid sequence, 152 residues long: UPF0266 membrane protein YobD (152 aa).

Transmembrane regions (helical) follow at residues 6-26 (LVLI…QFIM), 45-65 (VDSV…VTSH), and 67-87 (AQMT…IFWI).

This sequence belongs to the UPF0266 family.

Its subcellular location is the cell inner membrane. The sequence is that of UPF0266 membrane protein YobD from Salmonella enteritidis PT4 (strain P125109).